The sequence spans 292 residues: Formamidopyrimidine-DNA glycosylase (292 aa).

Proline 2 (schiff-base intermediate with DNA) is an active-site residue. Glutamate 3 functions as the Proton donor in the catalytic mechanism. The active-site Proton donor; for beta-elimination activity is lysine 61. Positions 96, 115, and 161 each coordinate DNA. The FPG-type zinc-finger motif lies at 247 to 281 (SAYGQEDRPCPRCGTAIRREKFMNRSSFSCPKCQP). Arginine 271 acts as the Proton donor; for delta-elimination activity in catalysis.

Belongs to the FPG family. In terms of assembly, monomer. The cofactor is Zn(2+).

The enzyme catalyses Hydrolysis of DNA containing ring-opened 7-methylguanine residues, releasing 2,6-diamino-4-hydroxy-5-(N-methyl)formamidopyrimidine.. The catalysed reaction is 2'-deoxyribonucleotide-(2'-deoxyribose 5'-phosphate)-2'-deoxyribonucleotide-DNA = a 3'-end 2'-deoxyribonucleotide-(2,3-dehydro-2,3-deoxyribose 5'-phosphate)-DNA + a 5'-end 5'-phospho-2'-deoxyribonucleoside-DNA + H(+). Its function is as follows. Involved in base excision repair of DNA damaged by oxidation or by mutagenic agents. Acts as a DNA glycosylase that recognizes and removes damaged bases. Has a preference for oxidized purines, such as 7,8-dihydro-8-oxoguanine (8-oxoG). Has AP (apurinic/apyrimidinic) lyase activity and introduces nicks in the DNA strand. Cleaves the DNA backbone by beta-delta elimination to generate a single-strand break at the site of the removed base with both 3'- and 5'-phosphates. This chain is Formamidopyrimidine-DNA glycosylase, found in Rhodococcus jostii (strain RHA1).